Consider the following 200-residue polypeptide: Anthranilate synthase component 2 (200 aa).

Positions 3 to 196 constitute a Glutamine amidotransferase type-1 domain; that stretch reads NILLLDNIDS…IHWASLKYIT (194 aa). 57–59 lines the L-glutamine pocket; the sequence is GPS. Cys-84 acts as the Nucleophile; for GATase activity in catalysis. L-glutamine is bound by residues Gln-88 and 134-135; that span reads SL. Residues His-170 and Glu-172 each act as for GATase activity in the active site.

In terms of assembly, heterotetramer consisting of two non-identical subunits: a beta subunit (TrpG) and a large alpha subunit (TrpE).

It carries out the reaction chorismate + L-glutamine = anthranilate + pyruvate + L-glutamate + H(+). It functions in the pathway amino-acid biosynthesis; L-tryptophan biosynthesis; L-tryptophan from chorismate: step 1/5. Its function is as follows. Part of a heterotetrameric complex that catalyzes the two-step biosynthesis of anthranilate, an intermediate in the biosynthesis of L-tryptophan. In the first step, the glutamine-binding beta subunit (TrpG) of anthranilate synthase (AS) provides the glutamine amidotransferase activity which generates ammonia as a substrate that, along with chorismate, is used in the second step, catalyzed by the large alpha subunit of AS (TrpE) to produce anthranilate. In the absence of TrpG, TrpE can synthesize anthranilate directly from chorismate and high concentrations of ammonia. This is Anthranilate synthase component 2 (trpG) from Buchnera aphidicola subsp. Acyrthosiphon pisum (strain APS) (Acyrthosiphon pisum symbiotic bacterium).